We begin with the raw amino-acid sequence, 251 residues long: Regulator of G-protein signaling 9-binding protein B (251 aa).

The Cytoplasmic portion of the chain corresponds to 1–230 (MPLQNVKVAD…NSKGCCSDGQ (230 aa)). Coiled coils occupy residues 52 to 94 (HLRD…ELER) and 158 to 187 (ANKA…MKVN). The helical; Anchor for type IV membrane protein transmembrane segment at 231–250 (LIVFLLLCGTALVAITLYSI) threads the bilayer. A topological domain (extracellular) is located at residue Leu-251.

Belongs to the RGS7BP/RGS9BP family.

It localises to the membrane. Its function is as follows. Regulator of G protein-coupled receptor (GPCR) signaling. Probably acts by regulating the activity of some 'R7' family protein (RGS6, RGS7, RGS9 and/or RGS11). The protein is Regulator of G-protein signaling 9-binding protein B (rgs9bp-b) of Xenopus laevis (African clawed frog).